The primary structure comprises 432 residues: uncharacterized protein (432 aa).

The next 12 membrane-spanning stretches (helical) occupy residues 35 to 55, 60 to 80, 112 to 132, 144 to 164, 185 to 205, 209 to 229, 242 to 262, 274 to 294, 313 to 333, 359 to 379, 384 to 404, and 408 to 428; these read VARVGAATALAVACVYTVIYL, LPPACFSIFAVFWGALGIATG, VAGMIGTVAAVVIAGSSPLWS, VGLLSVGVAGFCAQATLLGAL, LAVAAAAVVIGWGLAGYLWAA, AVAWLLMLMASPTARSAASLL, AHSITAAGASAILVMGFPVLL, GAVILAVTLTRAPLLVPLSAM, LIAPALVVGGIGAVGMLAAGL, AAAVAIAMLTLTGAAAVAAAL, LLGWVSATVASTLLLLLPMPL, and TVIALLFGPTVGIAIHVAALA.

To M.tuberculosis Rv3630 and M.bovis Mb3654.

It localises to the cell membrane. This is an uncharacterized protein from Mycobacterium tuberculosis (strain CDC 1551 / Oshkosh).